Here is a 553-residue protein sequence, read N- to C-terminus: Heterochromatin protein 1-binding protein 3 (553 aa).

Residue Ala2 is modified to N-acetylalanine. At Ser6 the chain carries Phosphoserine. Residues 30–131 (LGEKADDSTM…SKEKEKKVKK (102 aa)) are disordered. At Thr51 the chain carries Phosphothreonine. Residues 60-71 (GEEEKPEPDGSS) show a composition bias toward acidic residues. Residue Lys64 forms a Glycyl lysine isopeptide (Lys-Gly) (interchain with G-Cter in SUMO2) linkage. Thr85 carries the post-translational modification Phosphothreonine. A compositionally biased stretch (basic and acidic residues) spans 91 to 127 (REAEQPKGEPESGEKEESKSAEETKKEEKDQSKEKEK). Residue Lys97 forms a Glycyl lysine isopeptide (Lys-Gly) (interchain with G-Cter in SUMO2) linkage. 3 positions are modified to phosphoserine: Ser142, Ser155, and Ser156. Residues 157–232 (PRPKMDAILT…GASGSFVVVQ (76 aa)) form the H15 1 domain. At Lys190 the chain carries N6-acetyllysine. A disordered region spans residues 231–251 (VQKSKTPQKSKNRKKGSAVDP). Positions 236–246 (TPQKSKNRKKG) are enriched in basic residues. Ser247 carries the phosphoserine modification. The PxVxL motif signature appears at 253–257 (PQVKL). 2 H15 domains span residues 253–328 (PQVK…QLKK) and 335–411 (LGGS…QLCF). Lys256 is covalently cross-linked (Glycyl lysine isopeptide (Lys-Gly) (interchain with G-Cter in SUMO2)). The interval 422–553 (PKKVSDGSED…MKKKSFKTKK (132 aa)) is disordered. Positions 428 to 449 (GSEDEDEEEDEEESSEDSEDEE) are enriched in acidic residues. Residues Ser441, Ser442, and Ser445 each carry the phosphoserine modification. Basic residues-rich tracts occupy residues 488 to 509 (GKVR…RKGR) and 542 to 553 (SAMKKKSFKTKK).

In terms of assembly, interacts (via PxVxL motif) with CBX5.

It is found in the nucleus. The protein localises to the chromosome. Functionally, component of heterochromatin that maintains heterochromatin integrity during G1/S progression and regulates the duration of G1 phase to critically influence cell proliferative capacity. May play a role in hypoxia-induced oncogenesis. The chain is Heterochromatin protein 1-binding protein 3 (Hp1bp3) from Rattus norvegicus (Rat).